A 428-amino-acid polypeptide reads, in one-letter code: C4-dicarboxylate transport protein (428 aa).

A run of 8 helical transmembrane segments spans residues 8–28 (SLYF…HFYP), 44–64 (LIKM…IAGM), 76–96 (VALL…LIIV), 142–162 (IGAF…LFGF), 184–204 (VIFG…FGAM), 222–242 (LIIC…GSIA), 326–346 (IVHQ…AAGV), and 352–372 (IVLA…LALI).

This sequence belongs to the dicarboxylate/amino acid:cation symporter (DAACS) (TC 2.A.23) family.

The protein localises to the cell inner membrane. Functionally, responsible for the transport of dicarboxylates such as succinate, fumarate, and malate from the periplasm across the membrane. The sequence is that of C4-dicarboxylate transport protein from Escherichia coli O127:H6 (strain E2348/69 / EPEC).